Consider the following 545-residue polypeptide: MEVHNATSFLGHGGMAQHLQPVLESPFAESILALTPLQGIALFLCLFWGYSSLTLHRRIKVPGAPVHGYWSWLEPTWLLQLRYAKDAHKIIASGYKRYNVNGKPFVLRRQDLDITVLPTKYVAELRTIPNAKLSRGKANFMEWGDQWAMKNLWSHIDLPIKVISENRHGQQGKYLEAMRKEFEHAMEVEMPQVDDWTAVDIQKIIQMILARMVGKMIVGKEACRSPEWLDLAEHFTEDFVGASIIMRMLPKWTHPLVTNLLPQRWRMRRRLRDAVNITNPCVTRHREAREKRAKGIEVDYEDNMVGWMLDNAPDKQYVLDHLPILILIILVPAAHTTAMGISNLLFHLCEYPEWGAKLLKEINDVNNEFGPIGERLPAKDWVTKLDLLDSFFNESQRLSQPLSITPNRYAVEDFTFKDGLHIPKGALLGWVSIHNQIDPKIAPDPDTFDPLRSYRKRQVSAEENAKHLAGQPSLENLTFGYGSQACPGRNIAITVLKMILSRILRDYEFKFGDGQARPQNIYLLEFIIPDPKAKLMVRKREASVS.

An N-linked (GlcNAc...) asparagine glycan is attached at Asn-5. A helical transmembrane segment spans residues 30 to 50; sequence SILALTPLQGIALFLCLFWGY. An N-linked (GlcNAc...) asparagine glycan is attached at Asn-276. A helical membrane pass occupies residues 322-342; it reads LPILILIILVPAAHTTAMGIS. N-linked (GlcNAc...) asparagine glycans are attached at residues Asn-393 and Asn-476. Cys-486 provides a ligand contact to heme.

This sequence belongs to the cytochrome P450 family. It depends on heme as a cofactor.

It is found in the membrane. It functions in the pathway antibiotic biosynthesis. Its function is as follows. Cytochrome P450 monooxygenase; part of the gene cluster that mediates the biosynthesis of sordarin and hypoxysordarin, glycoside antibiotics with a unique tetracyclic diterpene aglycone structure. First, the geranylgeranyl diphosphate synthase sdnC constructs GGDP from farnesyl diphosphate and isopentenyl diphosphate. The diterpene cyclase sdnA then catalyzes the cyclization of GGDP to afford cycloaraneosene. Cycloaraneosene is then hydroxylated four times by the putative cytochrome P450 monooxygenases sdnB, sdnE, sdnF and sdnH to give a hydroxylated cycloaraneosene derivative such as cycloaraneosene-8,9,13,19-tetraol. Although the order of the hydroxylations is unclear, at least C8, C9 and C13 of the cycloaraneosene skeleton are hydroxylated before the sordaricin formation. Dehydration of the 13-hydroxy group of the hydroxylated cycloaraneosene derivative might be catalyzed by an unassigned hypothetical protein such as sdnG and sdnP to construct the cyclopentadiene moiety. The FAD-dependent oxidoreductase sdnN is proposed to catalyze the oxidation at C9 of the hydroxylated cycloaraneosene derivative and also catalyze the Baeyer-Villiger oxidation to give the lactone intermediate. The presumed lactone intermediate would be hydrolyzed to give an acrolein moiety and a carboxylate moiety. Then, [4+2]cycloaddition would occur between the acrolein moiety and the cyclopentadiene moiety to give sordaricin. SdnN might also be involved in the [4+2]cycloaddition after the hypothesized oxidation to accommodate the oxidized product and prompt the [4+2]cycloaddition. GDP-6-deoxy-D-altrose may be biosynthesized from GDP-D-mannose by the putative GDP-mannose-4,6-dehydratase sdnI and the short-chain dehydrogenase sdnK. The glycosyltransferase sdnJ catalyzes the attachment of 6-deoxy-D-altrose onto the 19-hydroxy group of sordaricin to give 4'-O-demethylsordarin. The methyltransferase sdnD would complete the biosynthesis of sordarin. Sordarin can be further modified into hypoxysordarin. The unique acyl chain at the 3'-hydroxy group of hypoxysordarin would be constructed by an iterative type I PKS sdnO and the trans-acting polyketide methyltransferase sdnL. SdnL would be responsible for the introduction of an alpha-methyl group of the polyketide chain. Alternatively, the beta-lactamase-like protein sdnR might be responsible for the cleavage and transfer of the polyketide chain from the PKS sdnO to sordarin. Two putative cytochrome P450 monooxygenases, sdnQ and sdnT, might catalyze the epoxidations of the polyketide chain to complete the biosynthesis of hypoxysordarin. Transcriptional regulators sdnM and sdnS are presumably encoded for the transcriptional regulation of the expression of the sdn gene cluster. The sequence is that of Cytochrome P450 monooxygenase sdnB from Sordaria araneosa (Pleurage araneosa).